Reading from the N-terminus, the 323-residue chain is Sphingolipid delta(4)-desaturase/C4-monooxygenase DES2 (323 aa).

Residue Gly2 is the site of N-myristoyl glycine attachment. A run of 2 helical transmembrane segments spans residues 45 to 65 (WTVT…QGLA) and 68 to 88 (WLFF…TLAI). The Histidine box-1 motif lies at 89–93 (HDISH). The interval 95 to 99 (TAFGT) is required for C4-hydroxylase activity. The Histidine box-2 signature appears at 128-132 (HVDHH). A helical transmembrane segment spans residues 209-231 (MVYLLASSLLGLGLHPISGHFVA). The Histidine box-3 signature appears at 259–263 (HMEHH).

This sequence belongs to the fatty acid desaturase type 1 family. DEGS subfamily.

The protein resides in the endoplasmic reticulum membrane. The enzyme catalyses a dihydroceramide + 2 Fe(II)-[cytochrome b5] + O2 + 2 H(+) = a phytoceramide + 2 Fe(III)-[cytochrome b5] + H2O. It carries out the reaction an N-acylsphinganine + 2 Fe(II)-[cytochrome b5] + O2 + 2 H(+) = an N-acylsphing-4-enine + 2 Fe(III)-[cytochrome b5] + 2 H2O. It catalyses the reaction N-octanoylsphinganine + 2 Fe(II)-[cytochrome b5] + O2 + 2 H(+) = N-octanoyl-4-hydroxysphinganine + 2 Fe(III)-[cytochrome b5] + H2O. The catalysed reaction is an N-acylsphinganine + 2 Fe(II)-[cytochrome b5] + O2 + 2 H(+) = an N-acyl-(4R)-4-hydroxysphinganine + 2 Fe(III)-[cytochrome b5] + H2O. It participates in membrane lipid metabolism; sphingolipid biosynthesis. Functionally, bifunctional enzyme which acts both as a sphingolipid delta(4)-desaturase and a sphingolipid C4-monooxygenase. The chain is Sphingolipid delta(4)-desaturase/C4-monooxygenase DES2 from Bos taurus (Bovine).